The following is a 138-amino-acid chain: Ferredoxin-2 (138 aa).

In terms of domain architecture, 2Fe-2S ferredoxin-type spans 27–117; sequence ADANLQSTDF…DAKIVYNLKH (91 aa). [2Fe-2S] cluster is bound by residues cysteine 62, cysteine 67, cysteine 70, and cysteine 100.

This sequence belongs to the 2Fe2S plant-type ferredoxin family. The cofactor is [2Fe-2S] cluster.

Functionally, ferredoxins are iron-sulfur proteins that transfer electrons in a wide variety of metabolic reactions. The protein is Ferredoxin-2 (fer2) of Haloarcula marismortui (strain ATCC 43049 / DSM 3752 / JCM 8966 / VKM B-1809) (Halobacterium marismortui).